The sequence spans 209 residues: V-type ATP synthase subunit D (209 aa).

This sequence belongs to the V-ATPase D subunit family.

Functionally, produces ATP from ADP in the presence of a proton gradient across the membrane. The chain is V-type ATP synthase subunit D from Anaeromyxobacter sp. (strain K).